The chain runs to 785 residues: Cadherin-7 (785 aa).

Residues 1–27 form the signal peptide; sequence MKLGKVEFCHLLQIIALFLCLSGMNQA. Positions 28–47 are excised as a propeptide; the sequence is EPSRSRSKPYFQSGRTRTKR. Residues 48-607 are Extracellular-facing; it reads SWVWNQFFVL…AYILPAGLST (560 aa). Cadherin domains are found at residues 49 to 153, 154 to 262, 263 to 377, 378 to 482, and 482 to 599; these read WVWN…EPKF, LDGP…PPRF, PRRS…PPVF, TSRL…APEF, and FAME…AEAY. N-linked (GlcNAc...) asparagine glycans are attached at residues Asn449 and Asn530. The chain crosses the membrane as a helical span at residues 608 to 628; the sequence is GALIAILACVLTLLVLVLLIV. Over 629–785 the chain is Cytoplasmic; sequence TMRRRKKEPL…YGSGPDCLYS (157 aa).

The protein localises to the cell membrane. Functionally, cadherins are calcium-dependent cell adhesion proteins. They preferentially interact with themselves in a homophilic manner in connecting cells; cadherins may thus contribute to the sorting of heterogeneous cell types. In Gallus gallus (Chicken), this protein is Cadherin-7 (CDH7).